A 110-amino-acid polypeptide reads, in one-letter code: Circadian clock oscillator protein KaiB (110 aa).

The protein belongs to the KaiB family. In terms of assembly, the KaiABC complex composition changes during the circadian cycle to control KaiC phosphorylation. Complexes KaiC(6), KaiA(2-4):KaiC(6), KaiB(6):KaiC(6) and KaiC(6):KaiB(6):KaiA(12) are among the most important forms, many form cooperatively. Undergoes a major conformational rearrangment; in the free state forms homotetramers as a dimer of dimers. When bound to the CI domain of KaiC switches to a monomeric thioredoxin-fold (KaiB(fs)). KaiB(fs) binds CikA, leading it to dephosphorylate phospho-RpaA.

Functionally, key component of the KaiABC oscillator complex, which constitutes the main circadian regulator in cyanobacteria. Complex composition changes during the circadian cycle to control KaiC phosphorylation. KaiA stimulates KaiC autophosphorylation, while KaiB sequesters KaiA, leading to KaiC autodephosphorylation. Phospho-Ser-431 KaiC accumulation triggers binding of KaiB to form the KaiB(6):KaiC(6) complex, leading to changes in output regulators CikA and SasA. KaiB switches to a thioredoxin-like fold (KaiB(fs)) when bound to KaiC. KaiB(6):KaiC(6) formation exposes a site for KaiA binding that sequesters KaiA from KaiC, making the KaiC(6):KaiB(6):KaiA(12) complex that results in KaiC autodephosphorylation. Its function is as follows. A metamorphic protein which reversibly switches between an inactive tetrameric fold and a rare, thioredoxin-like monomeric fold (KaiB(fs)). KaiB(fs) binds phospho-KaiC, KaiA and CikA. KaiA and CikA compete for binding to KaiB(fs), and KaiB(fs) and SasA compete for binding to KaiC, thus the clock oscillator and output signal pathway are tightly coupled. The polypeptide is Circadian clock oscillator protein KaiB (Synechococcus sp. (strain RCC307)).